The primary structure comprises 139 residues: Ribosome-binding factor A (139 aa).

The tract at residues glutamate 112–glutamate 139 is disordered. Residues alanine 119–alanine 132 show a composition bias toward low complexity.

This sequence belongs to the RbfA family. Monomer. Binds 30S ribosomal subunits, but not 50S ribosomal subunits or 70S ribosomes.

It is found in the cytoplasm. In terms of biological role, one of several proteins that assist in the late maturation steps of the functional core of the 30S ribosomal subunit. Associates with free 30S ribosomal subunits (but not with 30S subunits that are part of 70S ribosomes or polysomes). Required for efficient processing of 16S rRNA. May interact with the 5'-terminal helix region of 16S rRNA. The chain is Ribosome-binding factor A from Anaeromyxobacter dehalogenans (strain 2CP-1 / ATCC BAA-258).